Consider the following 143-residue polypeptide: Lutropin subunit beta (143 aa).

The signal sequence occupies residues 1–22 (MEMLQGLLLLWLLLLNVGGVWT). 6 disulfides stabilise this stretch: C31–C79, C45–C94, C48–C132, C56–C110, C60–C112, and C115–C122. N35 carries an N-linked (GlcNAc...) asparagine glycan.

Belongs to the glycoprotein hormones subunit beta family. In terms of assembly, heterodimer of a common alpha chain and a unique beta chain which confers biological specificity to thyrotropin, lutropin, follitropin and gonadotropin.

Its subcellular location is the secreted. Promotes spermatogenesis and ovulation by stimulating the testes and ovaries to synthesize steroids. In Felis catus (Cat), this protein is Lutropin subunit beta (LHB).